We begin with the raw amino-acid sequence, 486 residues long: Citrate synthase 3, mitochondrial (486 aa).

Residues 1 to 23 constitute a mitochondrion transit peptide; that stretch reads MVQRLLPGAHICRRSFNSSAIIK. Catalysis depends on residues H315, H361, and D419. The Microbody targeting signal signature appears at 484–486; the sequence is NKL.

Belongs to the citrate synthase family.

The protein resides in the mitochondrion. The catalysed reaction is oxaloacetate + acetyl-CoA + H2O = citrate + CoA + H(+). It functions in the pathway carbohydrate metabolism; tricarboxylic acid cycle; isocitrate from oxaloacetate: step 1/2. In terms of biological role, dual specificity mitochondrial citrate and methylcitrate synthase with similar catalytic efficiency with both acetyl-CoA and propionyl-CoA. The sequence is that of Citrate synthase 3, mitochondrial from Saccharomyces cerevisiae (strain ATCC 204508 / S288c) (Baker's yeast).